Here is a 481-residue protein sequence, read N- to C-terminus: Argininosuccinate synthase (481 aa).

Residues 17 to 25 (AFSGGLDTS) and Ala-43 each bind ATP. Position 99 (Tyr-99) interacts with L-citrulline. ATP contacts are provided by Gly-129 and Thr-131. The L-aspartate site is built by Thr-131, Asn-135, and Asp-136. Asn-135 is an L-citrulline binding site. Residue Asp-136 coordinates ATP. Positions 139 and 192 each coordinate L-citrulline. Asp-194 contributes to the ATP binding site. Residues Thr-201, Glu-203, and Glu-280 each contribute to the L-citrulline site.

The protein belongs to the argininosuccinate synthase family. Type 2 subfamily. Homotetramer.

The protein resides in the cytoplasm. The catalysed reaction is L-citrulline + L-aspartate + ATP = 2-(N(omega)-L-arginino)succinate + AMP + diphosphate + H(+). It participates in amino-acid biosynthesis; L-arginine biosynthesis; L-arginine from L-ornithine and carbamoyl phosphate: step 2/3. The protein is Argininosuccinate synthase (argG) of Streptomyces coelicolor (strain ATCC BAA-471 / A3(2) / M145).